Here is a 278-residue protein sequence, read N- to C-terminus: Tryptophan synthase alpha chain (278 aa).

Catalysis depends on proton acceptor residues Glu-50 and Asp-61.

The protein belongs to the TrpA family. As to quaternary structure, tetramer of two alpha and two beta chains.

The catalysed reaction is (1S,2R)-1-C-(indol-3-yl)glycerol 3-phosphate + L-serine = D-glyceraldehyde 3-phosphate + L-tryptophan + H2O. It functions in the pathway amino-acid biosynthesis; L-tryptophan biosynthesis; L-tryptophan from chorismate: step 5/5. Its function is as follows. The alpha subunit is responsible for the aldol cleavage of indoleglycerol phosphate to indole and glyceraldehyde 3-phosphate. The polypeptide is Tryptophan synthase alpha chain (Nitrobacter hamburgensis (strain DSM 10229 / NCIMB 13809 / X14)).